The primary structure comprises 193 residues: Annexin-2 receptor (193 aa).

Polar residues predominate over residues 78–87; it reads QSTLEPSTAK. The interval 78 to 111 is disordered; that stretch reads QSTLEPSTAKPTEFSWPGTQKQQEAPVEEVGQAE.

As to expression, widely expressed. Highly expressed in lymphocytes. Expressed in both resting CD4(+) and CD8(+) T-cells.

May act as a receptor for annexin II on marrow stromal cells to induce osteoclast formation. The chain is Annexin-2 receptor (ANXA2R) from Homo sapiens (Human).